We begin with the raw amino-acid sequence, 302 residues long: Endochitinase 4 (302 aa).

The signal sequence occupies residues 1–18 (EFTALSLLFSLLLLTASA). One can recognise a Chitin-binding type-1 domain in the interval 19–60 (EQCGKQAGGARCAAGLCCSNFGWCGNTNDYCGPGKCQSQCPS). Disulfide bonds link cysteine 21-cysteine 36, cysteine 30-cysteine 42, cysteine 35-cysteine 49, and cysteine 54-cysteine 58. The disordered stretch occupies residues 59–79 (PSGPSPKPPTPGPGPSGGDIG). The span at 61–72 (GPSPKPPTPGPG) shows a compositional bias: pro residues. The active-site Proton donor is glutamate 144. Cysteine 162 and cysteine 182 form a disulfide bridge.

The protein belongs to the glycosyl hydrolase 19 family. Chitinase class I subfamily.

The protein resides in the vacuole. It carries out the reaction Random endo-hydrolysis of N-acetyl-beta-D-glucosaminide (1-&gt;4)-beta-linkages in chitin and chitodextrins.. Defense against chitin-containing fungal pathogens. This Solanum tuberosum (Potato) protein is Endochitinase 4 (CHTB4).